The following is a 450-amino-acid chain: Sulfide:quinone oxidoreductase, mitochondrial (450 aa).

Residues 53-54 (AG), Glu-75, Gln-83, and Val-118 each bind FAD. An N6-acetyllysine mark is found at Lys-134 and Lys-173. The active-site Cysteine persulfide intermediate is the Cys-201. A disulfide bridge links Cys-201 with Cys-379. FAD is bound at residue Asp-336. Ser-343 is modified (phosphoserine). 344-347 (KTAA) is a binding site for FAD. The active-site Cysteine persulfide intermediate is the Cys-379.

Belongs to the SQRD family. FAD serves as cofactor.

Its subcellular location is the mitochondrion. The enzyme catalyses ubiquinone-10 + hydrogen sulfide + sulfite + 2 H(+) = ubiquinol-10 + thiosulfate. It catalyses the reaction a quinone + hydrogen sulfide + glutathione + H(+) = S-sulfanylglutathione + a quinol. It carries out the reaction ubiquinone-10 + hydrogen sulfide + glutathione + H(+) = S-sulfanylglutathione + ubiquinol-10. Functionally, catalyzes the oxidation of hydrogen sulfide with the help of a quinone, such as ubiquinone-10, giving rise to thiosulfate and ultimately to sulfane (molecular sulfur) atoms. Requires an additional electron acceptor; can use sulfite, sulfide or cyanide (in vitro). It is believed the in vivo electron acceptor is glutathione. This Mus musculus (Mouse) protein is Sulfide:quinone oxidoreductase, mitochondrial.